We begin with the raw amino-acid sequence, 708 residues long: Transcriptional regulator nsrM (708 aa).

Positions C37–C63 form a DNA-binding region, zn(2)-C6 fungal-type.

The protein resides in the nucleus. Its function is as follows. Transcriptional regulator; part of the gene cluster that mediates the biosynthesis of the tetrahydroxanthone dimer neosartorin, which exhibits antibacterial activity. This Aspergillus novofumigatus (strain IBT 16806) protein is Transcriptional regulator nsrM.